A 62-amino-acid polypeptide reads, in one-letter code: Large ribosomal subunit protein bL28 (62 aa).

It belongs to the bacterial ribosomal protein bL28 family.

The sequence is that of Large ribosomal subunit protein bL28 from Acholeplasma laidlawii (strain PG-8A).